The sequence spans 2605 residues: Protein ABERRANT POLLEN TRANSMISSION 1 (2605 aa).

Positions 1-43 (MMLGLVQLLVGFVVAWEAVELVLRHGLLLSVFKLAILAALAAA) are cleaved as a signal peptide. The segment at 137-158 (STNKKKPAPRKPISTTTAKAKG) is disordered. 11 N-linked (GlcNAc...) asparagine glycosylation sites follow: asparagine 232, asparagine 320, asparagine 348, asparagine 516, asparagine 587, asparagine 628, asparagine 696, asparagine 779, asparagine 1171, asparagine 1318, and asparagine 1459. A disordered region spans residues 305 to 326 (SASTVAEQKDEPSVDNKSAARS). Residues 311–326 (EQKDEPSVDNKSAARS) are compositionally biased toward basic and acidic residues. Residues 1761 to 1818 (MSKDGALSSVSSTSQPSEPQQIKSSESPPSNGSGKPDLTSSSENALKRSNNSDSEEEG) are disordered. A compositionally biased stretch (low complexity) spans 1768 to 1781 (SSVSSTSQPSEPQQ). Residues 1782–1812 (IKSSESPPSNGSGKPDLTSSSENALKRSNNS) are compositionally biased toward polar residues. N-linked (GlcNAc...) asparagine glycans are attached at residues asparagine 1791, asparagine 1810, asparagine 2003, asparagine 2280, and asparagine 2291. 2 disordered regions span residues 2269–2312 (VSTT…SSFD) and 2332–2361 (EGQTNTQYEPQDAAKDSKLLRPVRSTREDK). A compositionally biased stretch (polar residues) spans 2281–2300 (TSVAETNSPNNQSSKETTFA). 2 stretches are compositionally biased toward basic and acidic residues: residues 2303–2312 (PELRRTSSFD) and 2343–2361 (DAAKDSKLLRPVRSTREDK). N-linked (GlcNAc...) asparagine glycosylation is found at asparagine 2468 and asparagine 2564. A disordered region spans residues 2574–2605 (TELEVAELPPRAPGYNTDSSSDSSSAETSPKD).

The protein belongs to the SABRE family. Mature pollen-specific.

It is found in the secreted. It localises to the golgi apparatus. Functionally, may be involved in membrane trafficking. Required for tip growth in pollen tubes and root hairs. The chain is Protein ABERRANT POLLEN TRANSMISSION 1 from Zea mays (Maize).